We begin with the raw amino-acid sequence, 127 residues long: Large ribosomal subunit protein bL12 (127 aa).

This sequence belongs to the bacterial ribosomal protein bL12 family. As to quaternary structure, homodimer. Part of the ribosomal stalk of the 50S ribosomal subunit. Forms a multimeric L10(L12)X complex, where L10 forms an elongated spine to which 2 to 4 L12 dimers bind in a sequential fashion. Binds GTP-bound translation factors.

In terms of biological role, forms part of the ribosomal stalk which helps the ribosome interact with GTP-bound translation factors. Is thus essential for accurate translation. The protein is Large ribosomal subunit protein bL12 of Clavibacter michiganensis subsp. michiganensis (strain NCPPB 382).